The primary structure comprises 694 residues: MSAPEDLLLELGCEELPAREQMPLQDAATGIIGQLLDAAGLQFGSIHGYVTPRRLALWIKDVSRQSLPQETLRRGPLVARARDAQGKPTAAAEGFARSCGVSLDDLLTLETEKGPVLAWREVGTAQDSHALLPEIASRLVTSLPLRKRMRWGAGSDSFLRPVRWLLLRQGGQVLDWKMFGLDAGGESFGHRVHHPQAVRISTPAGYAGSLLQAKVMVDFAERRAHISGKMAALADEMAVTPILPEALLDEITGLNEWPVVLAGSFAADYLRVPEEALITVMMQHQRYVPLRGRNERLVPHYLFAANLHSRDTQVVIDGNNRVLRARLADAAFFWDQDRQISLQTRRAALAGVLFQDGLGSILDKTVRLQELAAALSPQFAVDAGDMNRAAALCKSDLLSGLVGEFPELQGIMGGHYARHDGENNRVATAIAQHYLPSGRDDEIPADAHGQCLAIADKLDTLCGFFAIGKVPTGDRDPFALRRAALGVLRIVLDAGVPLNLDEAVTRTLAAYGGAFARNRTEIRSAILDFFQDRMRVYFREEGFRADQIAAVLSRQPHEPLDARQRLEALALFQAEHAAADALAALIKRINNLLRKEVISGDWPIDPQYFMDPVENTLWDYWQALEQPLHAQLAERRYTAALGLLAGLRPAVDQFFDGVMVLAEDPVLRQNRLALLARLQEAFLRIADFSQLQGA.

It belongs to the class-II aminoacyl-tRNA synthetase family. As to quaternary structure, tetramer of two alpha and two beta subunits.

The protein resides in the cytoplasm. The enzyme catalyses tRNA(Gly) + glycine + ATP = glycyl-tRNA(Gly) + AMP + diphosphate. The protein is Glycine--tRNA ligase beta subunit of Acidithiobacillus ferrooxidans (strain ATCC 23270 / DSM 14882 / CIP 104768 / NCIMB 8455) (Ferrobacillus ferrooxidans (strain ATCC 23270)).